The following is a 249-amino-acid chain: Vesicle-associated membrane protein-associated protein A (249 aa).

A2 bears the N-acetylalanine mark. At 2-227 the chain is on the cytoplasmic side; that stretch reads ASASGTMAKH…VSFRENVTSP (226 aa). Positions 14–131 constitute an MSP domain; it reads ILVLDPPTDL…MDSKLRCVFE (118 aa). A phosphorylated FFAT motif binding region spans residues 50–53; the sequence is KVKT. K125 bears the N6-acetyllysine mark. S166 is subject to Phosphoserine. Residues 169–205 adopt a coiled-coil conformation; it reads DTETRKLVEECKRLQGEMMKLSEENRLLRDEGLRLRK. T170 carries the phosphothreonine modification. 3 positions are modified to phosphoserine: S214, S216, and S219. A helical; Anchor for type IV membrane protein membrane pass occupies residues 228 to 248; sequence LPSLLVVIAAIFIGFFLGKFI.

Belongs to the VAMP-associated protein (VAP) (TC 9.B.17) family. As to quaternary structure, homodimer; disulfide-linked. Heterodimer with VAPB. Interacts with VAMP1, VAMP2, STX1A, BET1, SEC22C and with the C-terminal domain of OCLN. Interacts (via MSP domain) with OSBPL1A (via FFAT motif). Interacts (via MSP domain) with ZFYVE27; may retain ZFYVE27 in the endoplasmic reticulum and regulate its function in cell projections formation. Interacts with OSBP. Interacts (via C-terminus) with RSAD2/viperin (via C-terminus). Interacts with IFITM3. Interacts with OSBPL3 (phosphorylated form). Interacts with KIF5A in a ZFYVE27-dependent manner. Interacts (via MSP domain) with STARD3 (via phosphorylated FFAT motif); this interaction recruits VAPA to the endosome. Interacts with STARD3NL (via FFAT motif). Interacts with CERT1. Interacts with PLEKHA3 and SACM1L to form a ternary complex. Interacts with VPS13A (via FFAT motif). Interacts with RB1CC1 (via phosphorylated FFAT motif), MIGA2 (via phosphorylated FFAT motif), RMDN3 (via phosphorylated FFAT motif), KCNB1 (via phosphorylated FFAT motif) and KCNB2 (via phosphorylated FFAT motif). Interacts (via MSP domain) with WDR44 (via FFAT-like motif); the interactions connect the endoplasmic reticulum (ER) with the endosomal tubule.

The protein resides in the endoplasmic reticulum membrane. The protein localises to the cell junction. Its subcellular location is the tight junction. It is found in the cell membrane. In terms of biological role, endoplasmic reticulum (ER)-anchored protein that mediates the formation of contact sites between the ER and endosomes via interaction with FFAT motif-containing proteins such as STARD3 or WDR44. STARD3-VAPA interaction enables cholesterol transfer from the ER to endosomes. Via interaction with WDR44 participates in neosynthesized protein export. In addition, recruited to the plasma membrane through OSBPL3 binding. The OSBPL3-VAPA complex stimulates RRAS signaling which in turn attenuates integrin beta-1 (ITGB1) activation at the cell surface. With OSBPL3, may regulate ER morphology. May play a role in vesicle trafficking. The sequence is that of Vesicle-associated membrane protein-associated protein A from Bos taurus (Bovine).